The chain runs to 407 residues: Multifunctional CCA protein (407 aa).

The ATP site is built by glycine 8 and arginine 11. CTP is bound by residues glycine 8 and arginine 11. Mg(2+) is bound by residues aspartate 21 and aspartate 23. Arginine 91, arginine 137, and arginine 140 together coordinate ATP. Arginine 91, arginine 137, and arginine 140 together coordinate CTP. One can recognise an HD domain in the interval 228–329 (TGIHTLMVAQ…IKIFDKMDVW (102 aa)).

This sequence belongs to the tRNA nucleotidyltransferase/poly(A) polymerase family. Bacterial CCA-adding enzyme type 1 subfamily. In terms of assembly, monomer. Can also form homodimers and oligomers. The cofactor is Mg(2+). Requires Ni(2+) as cofactor.

It carries out the reaction a tRNA precursor + 2 CTP + ATP = a tRNA with a 3' CCA end + 3 diphosphate. The catalysed reaction is a tRNA with a 3' CCA end + 2 CTP + ATP = a tRNA with a 3' CCACCA end + 3 diphosphate. In terms of biological role, catalyzes the addition and repair of the essential 3'-terminal CCA sequence in tRNAs without using a nucleic acid template. Adds these three nucleotides in the order of C, C, and A to the tRNA nucleotide-73, using CTP and ATP as substrates and producing inorganic pyrophosphate. tRNA 3'-terminal CCA addition is required both for tRNA processing and repair. Also involved in tRNA surveillance by mediating tandem CCA addition to generate a CCACCA at the 3' terminus of unstable tRNAs. While stable tRNAs receive only 3'-terminal CCA, unstable tRNAs are marked with CCACCA and rapidly degraded. The protein is Multifunctional CCA protein of Aliivibrio fischeri (strain ATCC 700601 / ES114) (Vibrio fischeri).